The following is a 308-amino-acid chain: Glucan 1,3-beta-glucosidase (308 aa).

Residues 1 to 18 (MQIKFLTTLATVLTSVAA) form the signal peptide. The Proton donor role is filled by Glu-119. A glycan (N-linked (GlcNAc...) asparagine) is linked at Asn-197. Glu-228 acts as the Nucleophile in catalysis.

This sequence belongs to the glycosyl hydrolase 17 family.

The protein localises to the secreted. The protein resides in the cell wall. It catalyses the reaction Successive hydrolysis of beta-D-glucose units from the non-reducing ends of (1-&gt;3)-beta-D-glucans, releasing alpha-glucose.. This Candida albicans (Yeast) protein is Glucan 1,3-beta-glucosidase (BGL2).